The sequence spans 544 residues: Probable acyl-activating enzyme 8 (544 aa).

This sequence belongs to the ATP-dependent AMP-binding enzyme family. Expressed at low levels in roots, leaves, stems, flowers and developing seeds.

Its function is as follows. May act as an acid--thiol ligase that activates carboxylic acids by forming acyl-CoAs. The sequence is that of Probable acyl-activating enzyme 8 (AAE8) from Arabidopsis thaliana (Mouse-ear cress).